The primary structure comprises 686 residues: Heat shock 70 kDa protein 12B (686 aa).

The interval 12–53 (LYIGSSPERSPVPSPPGSPRTQESCGIAPLTPSQSPKPEVRA) is disordered. Phosphoserine occurs at positions 25 and 29. At Thr42 the chain carries Phosphothreonine. 3 positions are modified to phosphoserine: Ser44, Ser46, and Ser276.

Belongs to the heat shock protein 70 family. As to expression, highest expression in muscle and heart. Lower levels in liver and kidney.

This is Heat shock 70 kDa protein 12B (HSPA12B) from Homo sapiens (Human).